The following is a 60-amino-acid chain: Ferredoxin (60 aa).

4Fe-4S ferredoxin-type domains are found at residues 2 to 30 and 31 to 60; these read VTID…EIQG and DKVV…TVKE. Residues Cys9, Cys14, Cys17, Cys21, Cys41, Cys44, Cys47, and Cys51 each coordinate [4Fe-4S] cluster.

The cofactor is [4Fe-4S] cluster.

Its function is as follows. Ferredoxins are iron-sulfur proteins that transfer electrons probably in the CO-dehydrogenase complex. This is Ferredoxin from Methanothermococcus thermolithotrophicus (Methanococcus thermolithotrophicus).